Consider the following 106-residue polypeptide: Large ribosomal subunit protein uL24 (106 aa).

The span at glutamate 84–arginine 97 shows a compositional bias: basic and acidic residues. The disordered stretch occupies residues glutamate 84 to lysine 106.

It belongs to the universal ribosomal protein uL24 family. As to quaternary structure, part of the 50S ribosomal subunit.

One of two assembly initiator proteins, it binds directly to the 5'-end of the 23S rRNA, where it nucleates assembly of the 50S subunit. In terms of biological role, one of the proteins that surrounds the polypeptide exit tunnel on the outside of the subunit. The polypeptide is Large ribosomal subunit protein uL24 (Anaeromyxobacter dehalogenans (strain 2CP-1 / ATCC BAA-258)).